The following is a 254-amino-acid chain: MTMPYYASAEQIMRDRSELARKGIARGRSVVVLTYRDGVLFVAENPSRALHKVSELYDRLGFAAVGKYNEFENLRRAGIVHADMRGYSYDRRDVTGRSLANAYAQTLGTIFTEQPKPYEVEICVAEIGRFGSSTPAQLYRITYDGSIADEQEFVVMGGTTEPIVTAMRESYQRDLDLESAVRLAVGALQKGGPAPAGTTEAEPRTLDVSALEVAVLDSNRPRRAFKRIAGSALEEMLPTPAATEDAPANGDAPS.

The segment at 234–254 (EEMLPTPAATEDAPANGDAPS) is disordered.

The protein belongs to the peptidase T1A family. In terms of assembly, the 20S proteasome core is composed of 14 alpha and 14 beta subunits that assemble into four stacked heptameric rings, resulting in a barrel-shaped structure. The two inner rings, each composed of seven catalytic beta subunits, are sandwiched by two outer rings, each composed of seven alpha subunits. The catalytic chamber with the active sites is on the inside of the barrel. Has a gated structure, the ends of the cylinder being occluded by the N-termini of the alpha-subunits. Is capped by the proteasome-associated ATPase, ARC.

It localises to the cytoplasm. Its pathway is protein degradation; proteasomal Pup-dependent pathway. With respect to regulation, the formation of the proteasomal ATPase ARC-20S proteasome complex, likely via the docking of the C-termini of ARC into the intersubunit pockets in the alpha-rings, may trigger opening of the gate for substrate entry. Interconversion between the open-gate and close-gate conformations leads to a dynamic regulation of the 20S proteasome proteolysis activity. Its function is as follows. Component of the proteasome core, a large protease complex with broad specificity involved in protein degradation. This chain is Proteasome subunit alpha, found in Rhodococcus erythropolis (strain PR4 / NBRC 100887).